Here is a 193-residue protein sequence, read N- to C-terminus: Bifunctional protein PyrR (193 aa).

Substrate is bound by residues 48–49, Arg89, Arg93, 110–118, Arg143, and Val167; these read TR and DDVLFSGRT. A PRPP-binding motif is present at residues 106–118; the sequence is VVLVDDVLFSGRT.

Belongs to the purine/pyrimidine phosphoribosyltransferase family. PyrR subfamily.

The enzyme catalyses UMP + diphosphate = 5-phospho-alpha-D-ribose 1-diphosphate + uracil. Its function is as follows. Regulates the transcription of the pyrimidine nucleotide (pyr) operon in response to exogenous pyrimidines. Also displays a weak uracil phosphoribosyltransferase activity which is not physiologically significant. This is Bifunctional protein PyrR from Streptomyces coelicolor (strain ATCC BAA-471 / A3(2) / M145).